The sequence spans 269 residues: 5'-nucleotidase SurE (269 aa).

A divalent metal cation-binding residues include D11, D12, S43, and N101.

This sequence belongs to the SurE nucleotidase family. A divalent metal cation serves as cofactor.

The protein resides in the cytoplasm. It carries out the reaction a ribonucleoside 5'-phosphate + H2O = a ribonucleoside + phosphate. Functionally, nucleotidase that shows phosphatase activity on nucleoside 5'-monophosphates. The protein is 5'-nucleotidase SurE of Prochlorococcus marinus (strain MIT 9301).